The sequence spans 364 residues: Caffeic acid 3-O-methyltransferase 2 (364 aa).

Residue methionine 129–leucine 135 participates in substrate binding. The interval alanine 161–methionine 179 is substrate binding. 5 residues coordinate S-adenosyl-L-methionine: glycine 207, aspartate 230, aspartate 250, methionine 251, and lysine 264. Histidine 268 serves as the catalytic Proton acceptor.

It belongs to the class I-like SAM-binding methyltransferase superfamily. Cation-independent O-methyltransferase family. COMT subfamily. As to quaternary structure, homodimer.

The enzyme catalyses (E)-caffeate + S-adenosyl-L-methionine = (E)-ferulate + S-adenosyl-L-homocysteine + H(+). It participates in aromatic compound metabolism; phenylpropanoid biosynthesis. Catalyzes the conversion of caffeic acid to ferulic acid and of 5-hydroxyferulic acid to sinapic acid. The resulting products may subsequently be converted to the corresponding alcohols that are incorporated into lignins. The chain is Caffeic acid 3-O-methyltransferase 2 (OMT2) from Populus tremuloides (Quaking aspen).